A 334-amino-acid polypeptide reads, in one-letter code: HTH-type transcriptional repressor PurR (334 aa).

The 55-residue stretch at 2–56 (ATIKDVARLAGVSTTTVSHVINKTRFVAEATQEKVMKAVDELNYAPSAVARSLKC) folds into the HTH lacI-type domain. The segment at residues 4 to 23 (IKDVARLAGVSTTTVSHVIN) is a DNA-binding region (H-T-H motif). The DNA-binding element occupies 48–56 (SAVARSLKC). Positions 73, 189, 220, and 274 each coordinate hypoxanthine.

As to quaternary structure, homodimer.

The protein operates within purine metabolism; purine nucleotide biosynthesis [regulation]. Functionally, is the main repressor of the genes involved in the de novo synthesis of purine nucleotides, regulating purB, purC, purEK, purF, purHD, purL, purMN and guaBA expression. PurR is allosterically activated to bind its cognate DNA by binding the purine corepressors, hypoxanthine or guanine, thereby effecting transcription repression. The chain is HTH-type transcriptional repressor PurR from Vibrio parahaemolyticus serotype O3:K6 (strain RIMD 2210633).